Reading from the N-terminus, the 204-residue chain is Large ribosomal subunit protein bL25 (204 aa).

S123 carries the post-translational modification Phosphoserine.

Belongs to the bacterial ribosomal protein bL25 family. CTC subfamily. As to quaternary structure, part of the 50S ribosomal subunit; part of the 5S rRNA/L5/L18/L25 subcomplex. Contacts the 5S rRNA. Binds to the 5S rRNA independently of L5 and L18.

Its function is as follows. This is one of the proteins that binds to the 5S RNA in the ribosome where it forms part of the central protuberance. This chain is Large ribosomal subunit protein bL25, found in Pseudomonas aeruginosa (strain UCBPP-PA14).